Here is a 338-residue protein sequence, read N- to C-terminus: NADPH dehydrogenase (338 aa).

Residue 22-25 (SPMC) coordinates FMN. Tyrosine 27 contributes to the substrate binding site. FMN contacts are provided by alanine 59 and glutamine 101. 163-166 (HAAH) contacts substrate. Residues arginine 214 and 306 to 307 (GR) each bind FMN.

Belongs to the NADH:flavin oxidoreductase/NADH oxidase family. NamA subfamily. In terms of assembly, homotetramer. It depends on FMN as a cofactor.

It carries out the reaction A + NADPH + H(+) = AH2 + NADP(+). Its function is as follows. Catalyzes the reduction of the double bond of an array of alpha,beta-unsaturated aldehydes and ketones. It also reduces the nitro group of nitroester and nitroaromatic compounds. It could have a role in detoxification processes. The protein is NADPH dehydrogenase of Listeria innocua serovar 6a (strain ATCC BAA-680 / CLIP 11262).